Consider the following 130-residue polypeptide: Large ribosomal subunit protein bL19 (130 aa).

This sequence belongs to the bacterial ribosomal protein bL19 family.

Its function is as follows. This protein is located at the 30S-50S ribosomal subunit interface and may play a role in the structure and function of the aminoacyl-tRNA binding site. This chain is Large ribosomal subunit protein bL19, found in Burkholderia orbicola (strain MC0-3).